Reading from the N-terminus, the 797-residue chain is Speckle targeted PIP5K1A-regulated poly(A) polymerase (797 aa).

The segment at 14 to 44 adopts a Matrin-type zinc-finger fold; it reads FHCNLCHVNIPNRPSLEDHVKGKKHLHLLRL. Positions 54 to 126 constitute an RRM domain; it reads NSVFVSGFKA…LKLRVKPREK (73 aa). Ser-205 is a binding site for ATP. Residues Asp-216 and Asp-218 each coordinate Mg(2+). Residues Asp-216, Asp-218, Asn-319, Arg-341, Tyr-363, and His-495 each contribute to the UTP site. Asn-319 is a binding site for ATP. A PAP-associated domain is found at 421-495; sequence DLCTLLFGFF…NVLDPFELNH (75 aa). The tract at residues 544-787 is KA1; binds the bulging loops of U6 snRNA but is dispensable for terminal uridylyltransferase activity; the sequence is QSEAAASSQP…FLPKMAETIM (244 aa). Residues 611–659 form a disordered region; that stretch reads EETQSLDKTDKSGSEMEVNNNRSLEDTNIQVKGEAGKKRPLSVEEGPST. The span at 615–624 shows a compositional bias: basic and acidic residues; that stretch reads SLDKTDKSGS. Residues 627–640 show a composition bias toward polar residues; that stretch reads EVNNNRSLEDTNIQ.

It belongs to the DNA polymerase type-B-like family. In terms of assembly, associates with the cleavage and polyadenylation specificity factor (CPSF) complex. It depends on Mg(2+) as a cofactor. Mn(2+) is required as a cofactor.

Its subcellular location is the nucleus. It is found in the nucleolus. It localises to the nucleus speckle. It carries out the reaction RNA(n) + UTP = RNA(n)-3'-uridine ribonucleotide + diphosphate. It catalyses the reaction RNA(n) + ATP = RNA(n)-3'-adenine ribonucleotide + diphosphate. In terms of biological role, poly(A) polymerase that creates the 3'-poly(A) tail of specific pre-mRNAs. In addition to polyadenylation, it is also required for the 3'-end cleavage of pre-mRNAs: binds to the 3'UTR of targeted pre-mRNAs and promotes the recruitment and assembly of the CPSF complex on the 3'UTR of pre-mRNAs. In addition to adenylyltransferase activity, also has uridylyltransferase activity. However, the ATP ratio is higher than UTP in cells, suggesting that it functions primarily as a poly(A) polymerase. The protein is Speckle targeted PIP5K1A-regulated poly(A) polymerase (tut1) of Danio rerio (Zebrafish).